The sequence spans 558 residues: Dihydroxy-acid dehydratase (558 aa).

Residue C50 participates in [2Fe-2S] cluster binding. A Mg(2+)-binding site is contributed by D82. Residue C123 coordinates [2Fe-2S] cluster. Mg(2+) is bound by residues D124 and K125. The residue at position 125 (K125) is an N6-carboxylysine. Residue C195 participates in [2Fe-2S] cluster binding. E447 is a Mg(2+) binding site. The Proton acceptor role is filled by S472.

It belongs to the IlvD/Edd family. In terms of assembly, homodimer. [2Fe-2S] cluster is required as a cofactor. Requires Mg(2+) as cofactor.

The catalysed reaction is (2R)-2,3-dihydroxy-3-methylbutanoate = 3-methyl-2-oxobutanoate + H2O. It catalyses the reaction (2R,3R)-2,3-dihydroxy-3-methylpentanoate = (S)-3-methyl-2-oxopentanoate + H2O. It functions in the pathway amino-acid biosynthesis; L-isoleucine biosynthesis; L-isoleucine from 2-oxobutanoate: step 3/4. Its pathway is amino-acid biosynthesis; L-valine biosynthesis; L-valine from pyruvate: step 3/4. Its function is as follows. Functions in the biosynthesis of branched-chain amino acids. Catalyzes the dehydration of (2R,3R)-2,3-dihydroxy-3-methylpentanoate (2,3-dihydroxy-3-methylvalerate) into 2-oxo-3-methylpentanoate (2-oxo-3-methylvalerate) and of (2R)-2,3-dihydroxy-3-methylbutanoate (2,3-dihydroxyisovalerate) into 2-oxo-3-methylbutanoate (2-oxoisovalerate), the penultimate precursor to L-isoleucine and L-valine, respectively. The polypeptide is Dihydroxy-acid dehydratase (Saccharolobus islandicus (strain M.16.27) (Sulfolobus islandicus)).